The following is a 432-amino-acid chain: MPIGKIESLDHEARGITRQEGKAIFVDGALPGETVEYASFRRKSKFELAHLVHVIKPSTARVEPCCPHFGVCGGCAMQHMEPSAQVAAKQRVLEDSLWHIGRIRPETMLPPIQGEPWGYRHRARLAVRRVSKSGGMLIGFHEWRSSYIADIRSCAILPPHVSALLMPMRELFAALSIAERIREVDVAVGEHCTALLLRILDPLTPADERLLCDFVDRNDVVFYLQPKGPDTAFRFYPSGGPRLSYTLPEFGLEFDFKPTDFTQVNHAVNRVLVRRALRLLDPQPSERIADMFCGLGNFTLPIARSGATVIGVEGSAALVRRGRESAAANGLADHVEFGVANLFECTEQSLAALGRFDKMLIDPPREGAVELVRAIGKDAPKRIVYVSCNPGTLARDAAVLVTEKGYRFVSAGAVNMFPHTAHVESIAVFELP.

Residues 1 to 53 enclose the TRAM domain; the sequence is MPIGKIESLDHEARGITRQEGKAIFVDGALPGETVEYASFRRKSKFELAHLVH. [4Fe-4S] cluster is bound by residues Cys66, Cys72, Cys75, and Cys154. Residues Gln263, Phe292, Asn297, Glu313, Asn341, and Asp362 each contribute to the S-adenosyl-L-methionine site. Cys388 functions as the Nucleophile in the catalytic mechanism.

This sequence belongs to the class I-like SAM-binding methyltransferase superfamily. RNA M5U methyltransferase family. RlmD subfamily.

It carries out the reaction uridine(1939) in 23S rRNA + S-adenosyl-L-methionine = 5-methyluridine(1939) in 23S rRNA + S-adenosyl-L-homocysteine + H(+). In terms of biological role, catalyzes the formation of 5-methyl-uridine at position 1939 (m5U1939) in 23S rRNA. The chain is 23S rRNA (uracil(1939)-C(5))-methyltransferase RlmD from Dechloromonas aromatica (strain RCB).